The chain runs to 223 residues: Phosphoribosylformylglycinamidine synthase subunit PurQ (223 aa).

The 221-residue stretch at 3-223 (SAVVQLPGLN…FASALDVIAA (221 aa)) folds into the Glutamine amidotransferase type-1 domain. Cys-86 (nucleophile) is an active-site residue. Catalysis depends on residues His-196 and Glu-198.

Part of the FGAM synthase complex composed of 1 PurL, 1 PurQ and 2 PurS subunits.

Its subcellular location is the cytoplasm. The enzyme catalyses N(2)-formyl-N(1)-(5-phospho-beta-D-ribosyl)glycinamide + L-glutamine + ATP + H2O = 2-formamido-N(1)-(5-O-phospho-beta-D-ribosyl)acetamidine + L-glutamate + ADP + phosphate + H(+). It catalyses the reaction L-glutamine + H2O = L-glutamate + NH4(+). Its pathway is purine metabolism; IMP biosynthesis via de novo pathway; 5-amino-1-(5-phospho-D-ribosyl)imidazole from N(2)-formyl-N(1)-(5-phospho-D-ribosyl)glycinamide: step 1/2. Its function is as follows. Part of the phosphoribosylformylglycinamidine synthase complex involved in the purines biosynthetic pathway. Catalyzes the ATP-dependent conversion of formylglycinamide ribonucleotide (FGAR) and glutamine to yield formylglycinamidine ribonucleotide (FGAM) and glutamate. The FGAM synthase complex is composed of three subunits. PurQ produces an ammonia molecule by converting glutamine to glutamate. PurL transfers the ammonia molecule to FGAR to form FGAM in an ATP-dependent manner. PurS interacts with PurQ and PurL and is thought to assist in the transfer of the ammonia molecule from PurQ to PurL. This chain is Phosphoribosylformylglycinamidine synthase subunit PurQ, found in Rhizobium meliloti (strain 1021) (Ensifer meliloti).